The sequence spans 240 residues: Methylthioribulose-1-phosphate dehydratase (240 aa).

A compositionally biased stretch (basic and acidic residues) spans 1-10 (MAQEIEKTNN). The tract at residues 1–20 (MAQEIEKTNNDHLVQSSDPE) is disordered. A substrate-binding site is contributed by Cys100. Positions 117 and 119 each coordinate Zn(2+). Glu146 acts as the Proton donor/acceptor in catalysis. His202 contributes to the Zn(2+) binding site.

The protein belongs to the aldolase class II family. MtnB subfamily. Zn(2+) is required as a cofactor.

It localises to the cytoplasm. It catalyses the reaction 5-(methylsulfanyl)-D-ribulose 1-phosphate = 5-methylsulfanyl-2,3-dioxopentyl phosphate + H2O. It participates in amino-acid biosynthesis; L-methionine biosynthesis via salvage pathway; L-methionine from S-methyl-5-thio-alpha-D-ribose 1-phosphate: step 2/6. Its function is as follows. Catalyzes the dehydration of methylthioribulose-1-phosphate (MTRu-1-P) into 2,3-diketo-5-methylthiopentyl-1-phosphate (DK-MTP-1-P). This Aspergillus fumigatus (strain CBS 144.89 / FGSC A1163 / CEA10) (Neosartorya fumigata) protein is Methylthioribulose-1-phosphate dehydratase.